Reading from the N-terminus, the 674-residue chain is Protein tesmin/TSO1-like CXC 2 (674 aa).

2 stretches are compositionally biased toward polar residues: residues 1 to 16 (MDTP…TPIS) and 76 to 89 (THNS…NSVE). Disordered regions lie at residues 1 to 20 (MDTP…KSRF) and 69 to 113 (KESR…GLNI). Residues 95 to 109 (STSHEEVPAEGEDTK) are compositionally biased toward basic and acidic residues. Residues 373–498 (SCKRCNCKKS…RCEGCKNAFG (126 aa)) enclose the CRC domain. Disordered stretches follow at residues 504 to 529 (SIDM…SQQN) and 623 to 655 (IPNI…RRNG). Residues 507–516 (MEAEQEEENE) are compositionally biased toward acidic residues.

It belongs to the lin-54 family. In terms of tissue distribution, ubiquitous but expressed mostly in all the aerial organs with highest expression in flowers.

The protein localises to the nucleus. Plays a role in development of both male and female reproductive tissues. The polypeptide is Protein tesmin/TSO1-like CXC 2 (TCX2) (Arabidopsis thaliana (Mouse-ear cress)).